The following is a 253-amino-acid chain: Core protein VP8 (253 aa).

The propeptide occupies 1-31 (MNDLLLENLFGEKALCAQVTRDQLLEIIAAG).

It belongs to the chordopoxvirinae VP8 family. Post-translationally, undergoes morphogenesis-associated proteolysis which cleaves the 28 kDa to a 25-kDa product. Proteolytic cleavage of major core proteins P4a (A10L), P4b (A3L), and VP8 (L4R), which occurs at a late stage of core formation, is required for production of infectious mature virions (MV).

It is found in the virion. Major core structural protein. The polypeptide is Core protein VP8 (Vertebrata (FPV)).